Here is a 290-residue protein sequence, read N- to C-terminus: Probable transcriptional regulatory protein HAH1 (290 aa).

It belongs to the TACO1 family.

The protein resides in the mitochondrion. This is Probable transcriptional regulatory protein HAH1 from Saccharomyces cerevisiae (strain ATCC 204508 / S288c) (Baker's yeast).